The chain runs to 119 residues: Holo-[acyl-carrier-protein] synthase (119 aa).

Mg(2+)-binding residues include Asp-8 and Glu-58.

The protein belongs to the P-Pant transferase superfamily. AcpS family. It depends on Mg(2+) as a cofactor.

The protein localises to the cytoplasm. The catalysed reaction is apo-[ACP] + CoA = holo-[ACP] + adenosine 3',5'-bisphosphate + H(+). In terms of biological role, transfers the 4'-phosphopantetheine moiety from coenzyme A to a Ser of acyl-carrier-protein. In Geobacillus sp. (strain WCH70), this protein is Holo-[acyl-carrier-protein] synthase.